The following is a 247-amino-acid chain: Ubiquinone biosynthesis O-methyltransferase (247 aa).

Arg-39, Gly-70, Asp-91, and Met-134 together coordinate S-adenosyl-L-methionine.

This sequence belongs to the methyltransferase superfamily. UbiG/COQ3 family.

The catalysed reaction is a 3-demethylubiquinol + S-adenosyl-L-methionine = a ubiquinol + S-adenosyl-L-homocysteine + H(+). It carries out the reaction a 3-(all-trans-polyprenyl)benzene-1,2-diol + S-adenosyl-L-methionine = a 2-methoxy-6-(all-trans-polyprenyl)phenol + S-adenosyl-L-homocysteine + H(+). The protein operates within cofactor biosynthesis; ubiquinone biosynthesis. In terms of biological role, O-methyltransferase that catalyzes the 2 O-methylation steps in the ubiquinone biosynthetic pathway. This is Ubiquinone biosynthesis O-methyltransferase from Cereibacter sphaeroides (strain ATCC 17023 / DSM 158 / JCM 6121 / CCUG 31486 / LMG 2827 / NBRC 12203 / NCIMB 8253 / ATH 2.4.1.) (Rhodobacter sphaeroides).